The following is a 308-amino-acid chain: Baculoviral IAP repeat-containing protein bir-2 (308 aa).

2 BIR repeats span residues 27 to 98 (RFAS…EFVM) and 170 to 241 (RLAT…DFIK). Positions 68, 71, 87, 94, 211, 214, 230, and 237 each coordinate Zn(2+).

This sequence belongs to the IAP family.

The protein is Baculoviral IAP repeat-containing protein bir-2 of Caenorhabditis elegans.